The sequence spans 111 residues: MSQADMTCSARQRVFQEALRKGNTKELHSLLQNMTNCEFNVNSFGPEGQTALHQSVIDGNLELVKLLVKFGADTRLANRDGWSALHIAAFGGHQDIVLYLITRAKYSSSAL.

ANK repeat units follow at residues 47 to 76 (EGQT…DTRL) and 80 to 109 (DGWS…YSSS).

The protein belongs to the NRARP family.

Its function is as follows. Regulates independently canonical Wnt and Notch signaling by modulating LEF1 and Notch protein turnover. Stabilizes LEF1, a pivotal transcription factor in the Wnt signaling cascade, by blocking its ubiquitination. Involved in angiogenesis; involved in intersegmental vessel patterning during development. In Danio rerio (Zebrafish), this protein is Notch-regulated ankyrin repeat-containing protein B (nrarpb).